Consider the following 205-residue polypeptide: MPGLLGKKIGMTSVFSADGKNVPCTVIEAGPCVVTQVKTVEKDGYAAVQLGFQDKKEKHTTKPLMGHFKRAGVTPKRHLAEFKEFETELNLGDTITVEMFNDATFVDVVGTSKGKGFQGVVKRHGFGGVGQATHGQHNRARKPGSIGACSYPAKVFKGMRMGGQLGGDRVTVQNLQVLKVIADHNLLLIKGSIPGCKGSIVIIEK.

This sequence belongs to the universal ribosomal protein uL3 family. Part of the 50S ribosomal subunit. Forms a cluster with proteins L14 and L19.

Functionally, one of the primary rRNA binding proteins, it binds directly near the 3'-end of the 23S rRNA, where it nucleates assembly of the 50S subunit. The chain is Large ribosomal subunit protein uL3 from Bacteroides thetaiotaomicron (strain ATCC 29148 / DSM 2079 / JCM 5827 / CCUG 10774 / NCTC 10582 / VPI-5482 / E50).